We begin with the raw amino-acid sequence, 321 residues long: Glutaminase (321 aa).

7 residues coordinate substrate: Ser69, Asn120, Glu165, Asn172, Tyr196, Tyr248, and Val266.

Belongs to the glutaminase family. Homotetramer.

It catalyses the reaction L-glutamine + H2O = L-glutamate + NH4(+). In Bacteroides fragilis (strain ATCC 25285 / DSM 2151 / CCUG 4856 / JCM 11019 / LMG 10263 / NCTC 9343 / Onslow / VPI 2553 / EN-2), this protein is Glutaminase.